We begin with the raw amino-acid sequence, 443 residues long: MAASPHTLSSRLLTGCVGGSVWYLERRTIQDSPHKFLHLLRNVNKQWITFQHFSFLKRMYVTQLNRSHNQQVRPKPEPVASPFLEKTSSGQAKAEIYEMRPLSPPSLSLSRKPNEKELIELEPDSVIEDSIDVGKETKEEKRWKEMKLQVYDLPGILARLSKIKLTALVVSTTAAGFALAPGPFDWPCFLLTSVGTGLASCAANSINQFFEVPFDSNMNRTKNRPLVRGQISPLLAVSFATCCAVPGVAILTLGVNPLTGALGLFNIFLYTCCYTPLKRISIANTWVGAVVGAIPPVMGWTAATGSLDAGAFLLGGILYSWQFPHFNALSWGLREDYSRGGYCMMSVTHPGLCRRVALRHCLALLVLSAAAPVLDITTWTFPIMALPINAYISYLGFRFYVDADRRSSRRLFFCSLWHLPLLLLLMLTCKRPSGGGDAGPPPS.

Helical transmembrane passes span 174–194 (AAGF…LTSV), 235–255 (LAVS…TLGV), 257–277 (PLTG…YTPL), 280–300 (ISIA…VMGW), 309–329 (AGAF…FNAL), 364–384 (LLVL…FPIM), and 411–431 (LFFC…TCKR).

It belongs to the UbiA prenyltransferase family.

The protein localises to the mitochondrion membrane. It catalyses the reaction heme b + (2E,6E)-farnesyl diphosphate + H2O = Fe(II)-heme o + diphosphate. Converts protoheme IX and farnesyl diphosphate to heme O. The protein is Protoheme IX farnesyltransferase, mitochondrial (COX10) of Homo sapiens (Human).